Consider the following 554-residue polypeptide: 7-epi-sesquithujene synthase (554 aa).

Asp308 and Asp312 together coordinate Mg(2+). The substrate site is built by Asp308, Asp312, Arg449, and Asn452. A DDXXD motif motif is present at residues 308–312 (DDMFD). Mg(2+) contacts are provided by Asn452, Ser456, and Glu460.

Belongs to the terpene synthase family. Monomer. Mg(2+) serves as cofactor. Mn(2+) is required as a cofactor. Highly expressed in the husk. Detected in leaf sheaths and leaves.

Its subcellular location is the cytoplasm. It carries out the reaction (2E,6E)-farnesyl diphosphate = 7-epi-sesquithujene + diphosphate. The catalysed reaction is (2E,6E)-farnesyl diphosphate = (1S,5S,6R)-alpha-bergamotene + diphosphate. It catalyses the reaction (2E,6E)-farnesyl diphosphate = (E)-beta-farnesene + diphosphate. The enzyme catalyses (2E,6E)-farnesyl diphosphate = (S)-beta-bisabolene + diphosphate. It carries out the reaction (2Z,6E)-farnesyl diphosphate = (-)-beta-curcumene + diphosphate. The catalysed reaction is (2E,6E)-farnesyl diphosphate = gamma-curcumene + diphosphate. It catalyses the reaction (2E,6E)-farnesyl diphosphate = sesquisabinene A + diphosphate. Its pathway is secondary metabolite biosynthesis; terpenoid biosynthesis. Its function is as follows. Sesquiterpene synthase involved in the production after herbivore attack of a blend of volatiles that attracts natural enemies of herbivores. Converts farnesyl diphosphate to (S)-beta-bisabolene and 7-epi-sesquithujene, along with a mixture of more than 20 other minor sesquiterpene olefins. Can also act in vitro as a monoterpene synthase, converting geranyl diphosphate to (S)-(-)-limonene, beta-myrcene and 11 other monoterpenes. The protein is 7-epi-sesquithujene synthase of Zea mays (Maize).